Here is a 405-residue protein sequence, read N- to C-terminus: LanC-like protein GCL2 (405 aa).

Residues cysteine 278, cysteine 323, and histidine 324 each coordinate Zn(2+).

This sequence belongs to the LanC-like protein family.

In terms of biological role, may play a role in signaling. May be not involved in abscisic acid (ABA) signaling. The protein is LanC-like protein GCL2 (GCL2) of Arabidopsis thaliana (Mouse-ear cress).